The sequence spans 549 residues: Probable protein kinase UbiB (549 aa).

A Protein kinase domain is found at 123–501 (DFNETPLASA…QQQAHKSNYL (379 aa)). ATP is bound by residues 129–137 (LASASISQV) and K152. D287 acts as the Proton acceptor in catalysis. Transmembrane regions (helical) follow at residues 498–518 (SNYL…LFNQ) and 520–540 (ATLW…IIGW).

It belongs to the ABC1 family. UbiB subfamily.

The protein localises to the cell inner membrane. Its pathway is cofactor biosynthesis; ubiquinone biosynthesis [regulation]. Is probably a protein kinase regulator of UbiI activity which is involved in aerobic coenzyme Q (ubiquinone) biosynthesis. This Shewanella sp. (strain MR-4) protein is Probable protein kinase UbiB.